A 468-amino-acid polypeptide reads, in one-letter code: Phenylalanine--tRNA ligase alpha subunit (468 aa).

L-phenylalanine-binding positions include T311, 350-352, and F390; that span reads QLD. E392 serves as a coordination point for Mg(2+).

It belongs to the class-II aminoacyl-tRNA synthetase family. Phe-tRNA synthetase alpha subunit type 2 subfamily. As to quaternary structure, tetramer of two alpha and two beta subunits. It depends on Mg(2+) as a cofactor.

It localises to the cytoplasm. It catalyses the reaction tRNA(Phe) + L-phenylalanine + ATP = L-phenylalanyl-tRNA(Phe) + AMP + diphosphate + H(+). This is Phenylalanine--tRNA ligase alpha subunit from Saccharolobus solfataricus (strain ATCC 35092 / DSM 1617 / JCM 11322 / P2) (Sulfolobus solfataricus).